The sequence spans 937 residues: Periplasmic nitrate reductase (937 aa).

A signal peptide (tat-type signal) is located at residues M1–A31. The region spanning W40–D96 is the 4Fe-4S Mo/W bis-MGD-type domain. Residues C47, C50, C54, and C82 each coordinate [4Fe-4S] cluster. Mo-bis(molybdopterin guanine dinucleotide) contacts are provided by residues K84, Q152, N177, C181, W214–M221, M422, Q426, N532, K580, D607, and T827–S836. Residue W903 coordinates substrate. Residues N911 and K928 each contribute to the Mo-bis(molybdopterin guanine dinucleotide) site.

Belongs to the prokaryotic molybdopterin-containing oxidoreductase family. NasA/NapA/NarB subfamily. In terms of assembly, component of the periplasmic nitrate reductase NapAB complex composed of NapA and NapB. [4Fe-4S] cluster is required as a cofactor. The cofactor is Mo-bis(molybdopterin guanine dinucleotide). Post-translationally, predicted to be exported by the Tat system. The position of the signal peptide cleavage has not been experimentally proven.

Its subcellular location is the periplasm. It catalyses the reaction 2 Fe(II)-[cytochrome] + nitrate + 2 H(+) = 2 Fe(III)-[cytochrome] + nitrite + H2O. Its function is as follows. Catalytic subunit of the periplasmic nitrate reductase complex NapAB. Receives electrons from NapB and catalyzes the reduction of nitrate to nitrite. The polypeptide is Periplasmic nitrate reductase (Nautilia profundicola (strain ATCC BAA-1463 / DSM 18972 / AmH)).